A 351-amino-acid polypeptide reads, in one-letter code: MSITIKLGQLAEFLGATLRGDKDKDITGLATLEEAGPGQISFLAKPQYRKYLVDTQAAAVLLKPADADGYTGDALLVPDPYLAYARISHFFDPKPKSSAGVHPTAVIAEDAQVDPAASIGAFAVIESGARIAANVTIGAHCFIGARSEIGEGGWLAPRVTLYHDVRIGKRVVIQSGAVLGGEGFGFVNDKGVWQKFAQIGGVTLGDDVEIGVNTAIDRGALSDTRIGNGVKLDNQIHIAHNVQIGDHTAMAACVGISGSAKIGKHCMLAGGVGLVGHIDICDGVYITGMTMVTHSITEPGSYSSGTAMQPSAEWRKSAARLRKIDDMARRLQKLEKAVETVTCADNRSSDG.

H240 (proton acceptor) is an active-site residue.

It belongs to the transferase hexapeptide repeat family. LpxD subfamily. In terms of assembly, homotrimer.

The catalysed reaction is a UDP-3-O-[(3R)-3-hydroxyacyl]-alpha-D-glucosamine + a (3R)-hydroxyacyl-[ACP] = a UDP-2-N,3-O-bis[(3R)-3-hydroxyacyl]-alpha-D-glucosamine + holo-[ACP] + H(+). It participates in bacterial outer membrane biogenesis; LPS lipid A biosynthesis. In terms of biological role, catalyzes the N-acylation of UDP-3-O-acylglucosamine using 3-hydroxyacyl-ACP as the acyl donor. Is involved in the biosynthesis of lipid A, a phosphorylated glycolipid that anchors the lipopolysaccharide to the outer membrane of the cell. This Pseudomonas syringae pv. tomato (strain ATCC BAA-871 / DC3000) protein is UDP-3-O-acylglucosamine N-acyltransferase.